The sequence spans 306 residues: Acetaldehyde dehydrogenase (306 aa).

The active-site Acyl-thioester intermediate is Cys131. NAD(+)-binding positions include 162 to 170 and Asn273; that span reads SAGPGTRKN.

The protein belongs to the acetaldehyde dehydrogenase family.

It carries out the reaction acetaldehyde + NAD(+) + CoA = acetyl-CoA + NADH + H(+). This chain is Acetaldehyde dehydrogenase, found in Albidiferax ferrireducens (strain ATCC BAA-621 / DSM 15236 / T118) (Rhodoferax ferrireducens).